We begin with the raw amino-acid sequence, 539 residues long: Effector protein hopAB1 (539 aa).

4 disordered regions span residues 1–93, 163–220, 230–249, and 315–336; these read MPGI…PEAQ, QTVR…RHPQ, ASAA…LRRL, and RQTT…SGRR. The span at 18-31 shows a compositional bias: basic and acidic residues; sequence TDGEPVTEREHDSS. The span at 181–194 shows a compositional bias: low complexity; the sequence is SSSGSSQRSLIGRS.

Belongs to the HopAB family.

The protein localises to the secreted. Its function is as follows. Effector protein that plays different roles depending on the species and plant cultivars that interact with the pathogen. Acts as a virulence determinant by enhancing the development of disease symptoms and bacterial growth. Acts as an avirulence factor by eliciting hypersensitive response (HR) and plant resistance. The polypeptide is Effector protein hopAB1 (hopAB1) (Pseudomonas savastanoi pv. phaseolicola (strain 1448A / Race 6) (Pseudomonas syringae pv. phaseolicola (strain 1448A / Race 6))).